The following is a 357-amino-acid chain: MSKRKKLLVMAGGTGGHVFPAIAVAQYLQKQDWDICWLGTRDRMEAKLVPKHGIPIEFIQISGLRGKGLITLLKAPFVILRAVLQARKIIKKYQPDVVLGMGGYVSGPGGVAAKLCNIPVVVHEQNAVLGLTNSLLAKIATRVLQAFPNTFPNAEVVGNPVREAFFSVPMPQERFNTTCETLKVLVVGGSQGAHILNTILPEVLAQLPNRLEIVHQVGSGSVENVTALYHDKVNLTQESVQITEFIDDIAQAYAWADIVICRSGALTVCELAAVGTPAIFVPFQHKDKQQYLNAKYLADVGAAYIVEQHELDAEKIAQLLKNVDKEKLLEMAEKAKNMSTPLSTQRVAEVIMDTVKT.

UDP-N-acetyl-alpha-D-glucosamine-binding positions include 14 to 16 (TGG), N126, R162, S190, I246, 265 to 270 (ALTVCE), and Q290.

Belongs to the glycosyltransferase 28 family. MurG subfamily.

The protein resides in the cell inner membrane. The enzyme catalyses di-trans,octa-cis-undecaprenyl diphospho-N-acetyl-alpha-D-muramoyl-L-alanyl-D-glutamyl-meso-2,6-diaminopimeloyl-D-alanyl-D-alanine + UDP-N-acetyl-alpha-D-glucosamine = di-trans,octa-cis-undecaprenyl diphospho-[N-acetyl-alpha-D-glucosaminyl-(1-&gt;4)]-N-acetyl-alpha-D-muramoyl-L-alanyl-D-glutamyl-meso-2,6-diaminopimeloyl-D-alanyl-D-alanine + UDP + H(+). It functions in the pathway cell wall biogenesis; peptidoglycan biosynthesis. Cell wall formation. Catalyzes the transfer of a GlcNAc subunit on undecaprenyl-pyrophosphoryl-MurNAc-pentapeptide (lipid intermediate I) to form undecaprenyl-pyrophosphoryl-MurNAc-(pentapeptide)GlcNAc (lipid intermediate II). The chain is UDP-N-acetylglucosamine--N-acetylmuramyl-(pentapeptide) pyrophosphoryl-undecaprenol N-acetylglucosamine transferase from Histophilus somni (strain 129Pt) (Haemophilus somnus).